A 534-amino-acid polypeptide reads, in one-letter code: Invertase (534 aa).

The first 21 residues, 1–21 (MKITTLVASILMSVLLEPVIA), serve as a signal peptide directing secretion. Substrate contacts are provided by residues 46–49 (WLND) and Gln67. Asp49 is an active-site residue. Asn71 carries an N-linked (GlcNAc...) asparagine glycan. Position 109–110 (109–110 (FS)) interacts with substrate. Asn118, Asn119, and Asn172 each carry an N-linked (GlcNAc...) asparagine glycan. 177–178 (RD) provides a ligand contact to substrate. A glycan (N-linked (GlcNAc...) asparagine) is linked at Asn218. Residues Glu229 and Trp313 each coordinate substrate. N-linked (GlcNAc...) asparagine glycans are attached at residues Asn375, Asn381, Asn392, and Asn420.

Belongs to the glycosyl hydrolase 32 family.

The catalysed reaction is Hydrolysis of terminal non-reducing beta-D-fructofuranoside residues in beta-D-fructofuranosides.. The protein is Invertase (INV) of Debaryomyces hansenii (strain ATCC 36239 / CBS 767 / BCRC 21394 / JCM 1990 / NBRC 0083 / IGC 2968) (Yeast).